The primary structure comprises 189 residues: MGLLDARISNRNVLVTSVDNVMNWARLSSLWPMGFGLACCAIEMMATNASNYDLERFGIFPRSSPRQSDLMIVAGTVTMKMAERVVTLYEQMPEPRYVLSMGSCSNSGGPYWHHGYHVLKGVDRIIPVDVYVPGCPPRPEALIGGLMKIQELIRMEGLGISRQDALKKLAGKRVDPQQVIDQVRKSATA.

Residues Cys39, Cys40, Cys104, and Cys135 each contribute to the [4Fe-4S] cluster site.

Belongs to the complex I 20 kDa subunit family. In terms of assembly, NDH-1 is composed of 14 different subunits. Subunits NuoB, C, D, E, F, and G constitute the peripheral sector of the complex. [4Fe-4S] cluster serves as cofactor.

It localises to the cell inner membrane. The enzyme catalyses a quinone + NADH + 5 H(+)(in) = a quinol + NAD(+) + 4 H(+)(out). Its function is as follows. NDH-1 shuttles electrons from NADH, via FMN and iron-sulfur (Fe-S) centers, to quinones in the respiratory chain. The immediate electron acceptor for the enzyme in this species is believed to be a menaquinone. Couples the redox reaction to proton translocation (for every two electrons transferred, four hydrogen ions are translocated across the cytoplasmic membrane), and thus conserves the redox energy in a proton gradient. The chain is NADH-quinone oxidoreductase subunit B from Chlorobaculum tepidum (strain ATCC 49652 / DSM 12025 / NBRC 103806 / TLS) (Chlorobium tepidum).